Here is a 211-residue protein sequence, read N- to C-terminus: MKWRRMPVGPIQANAYFLISDDQCLIFDPGGEGHKINQYIKEKGLTPLAILLTHAHFDHIGALDEVREKWDIPVYLHQNEKNWLADASLNGSGMLRGIEVTAKPADHLIEGDGELNIGPFHLETLFTPGHSPGSVSYYVKDADLVISGDVLFQGGIGRTDLIGGNQETLLTSIHEKLLTLPEHTLVLSGHGPETDVLTEQDQNPFLNGFSL.

Zn(2+) contacts are provided by H54, H56, D58, H59, H130, D149, and H190.

The protein belongs to the metallo-beta-lactamase superfamily. Glyoxalase II family. It depends on Zn(2+) as a cofactor.

The polypeptide is Probable metallo-hydrolase YqgX (yqgX) (Bacillus subtilis (strain 168)).